The following is a 1098-amino-acid chain: Protein diaphanous homolog 2 (1098 aa).

Met1 is modified (N-acetylmethionine). Residues 1–62 (MEELGAAASG…SFRKSATKRE (62 aa)) are disordered. Residues 36–52 (ANEEETRNKPKLRDRIT) are compositionally biased toward basic and acidic residues. One can recognise a GBD/FH3 domain in the interval 90 to 463 (SLILSEKEVL…QIVLHCSGMD (374 aa)). Coiled coils occupy residues 375-416 (QLRV…NMLK) and 490-539 (EENE…GQGV). 5 disordered regions span residues 537–565 (QGVP…PPPP), 578–611 (PPPP…GVFP), 679–699 (MKGQ…PKKK), 1007–1047 (HKRK…NKEG), and 1063–1098 (GAAF…MSSK). Composition is skewed to pro residues over residues 543 to 565 (IPGP…PPPP) and 578 to 608 (PPPP…PPGG). The 77-residue stretch at 544-620 (PGPPPPPPLP…PLLSGPIELP (77 aa)) folds into the FH1 domain. The 401-residue stretch at 625 to 1025 (QKKLYKPDIP…SRRAKLAKEK (401 aa)) folds into the FH2 domain. The stretch at 999-1050 (FLEALKENHKRKEMEEKSRRAKLAKEKAEQEKLERQKKKKQLIDINKEGDET) forms a coiled coil. Basic and acidic residues-rich tracts occupy residues 1007-1032 (HKRK…EKLE) and 1075-1087 (RNPD…LERS). The region spanning 1048-1078 (DETGVMDNLLEALQSGAAFRDRRKRIPRNPD) is the DAD domain.

This sequence belongs to the formin homology family. Diaphanous subfamily. Interacts with MAPRE1 and APC.

Its function is as follows. May be involved in oogenesis. This is Protein diaphanous homolog 2 (Diaph2) from Mus musculus (Mouse).